We begin with the raw amino-acid sequence, 341 residues long: Glycerol-3-phosphate dehydrogenase [NAD(P)+] (341 aa).

Residues Ser15, Trp16, Arg36, and Lys110 each contribute to the NADPH site. 3 residues coordinate sn-glycerol 3-phosphate: Lys110, Gly139, and Ser141. Ala143 is a binding site for NADPH. Sn-glycerol 3-phosphate contacts are provided by Lys194, Asp247, Ser257, Arg258, and Asn259. Lys194 (proton acceptor) is an active-site residue. Residue Arg258 coordinates NADPH. Residues Val282 and Glu284 each contribute to the NADPH site.

The protein belongs to the NAD-dependent glycerol-3-phosphate dehydrogenase family.

The protein localises to the cytoplasm. The catalysed reaction is sn-glycerol 3-phosphate + NAD(+) = dihydroxyacetone phosphate + NADH + H(+). It carries out the reaction sn-glycerol 3-phosphate + NADP(+) = dihydroxyacetone phosphate + NADPH + H(+). The protein operates within membrane lipid metabolism; glycerophospholipid metabolism. Functionally, catalyzes the reduction of the glycolytic intermediate dihydroxyacetone phosphate (DHAP) to sn-glycerol 3-phosphate (G3P), the key precursor for phospholipid synthesis. This chain is Glycerol-3-phosphate dehydrogenase [NAD(P)+], found in Stenotrophomonas maltophilia (strain K279a).